The sequence spans 131 residues: UPF0146 protein PYRAB01940 (131 aa).

Belongs to the UPF0146 family.

This chain is UPF0146 protein PYRAB01940, found in Pyrococcus abyssi (strain GE5 / Orsay).